We begin with the raw amino-acid sequence, 122 residues long: Large ribosomal subunit protein uL18 (122 aa).

It belongs to the universal ribosomal protein uL18 family. As to quaternary structure, part of the 50S ribosomal subunit; part of the 5S rRNA/L5/L18/L25 subcomplex. Contacts the 5S and 23S rRNAs.

Its function is as follows. This is one of the proteins that bind and probably mediate the attachment of the 5S RNA into the large ribosomal subunit, where it forms part of the central protuberance. The sequence is that of Large ribosomal subunit protein uL18 from Leptospira biflexa serovar Patoc (strain Patoc 1 / Ames).